Here is a 609-residue protein sequence, read N- to C-terminus: Serine/threonine-protein phosphatase 4 regulatory subunit 2 (609 aa).

Residue serine 68 is modified to Phosphoserine. The disordered stretch occupies residues 175–569 (NNNGNADEGS…EEARVSPSAT (395 aa)). Low complexity predominate over residues 183-194 (GSSPGAGSAGCA). Positions 201 to 225 (RSDDNDQPKAKKAKLEIDGEERSEA) are enriched in basic and acidic residues. A phosphoserine mark is found at serine 223 and serine 226. A compositionally biased stretch (basic and acidic residues) spans 233–244 (VATRVKNEKDEK). Position 252 is a phosphoserine (serine 252). Positions 258 to 270 (EIEEPDEEVDEAD) are enriched in acidic residues. 2 stretches are compositionally biased toward basic and acidic residues: residues 310–351 (IEAE…KPDG) and 375–400 (EPVK…KQDD). The span at 401–410 (IDSTETDDAP) shows a compositional bias: acidic residues. The span at 414 to 462 (KPAEEKIASSESKPKTKSEDDPEAETKKSQPEKTETEAAEKSVSDEKQA) shows a compositional bias: basic and acidic residues. Residue threonine 602 is modified to Phosphothreonine. The residue at position 603 (serine 603) is a Phosphoserine.

It belongs to the PPP4R2 family. In terms of assembly, serine/threonine-protein phosphatase 4 (PP4) occurs in different assemblies of the catalytic and one or more regulatory subunits. Probably part of a PP4 PPP4C-PPP4R2-PPP4R3 complex containing Pp4-19C, PPP4R2r and flfl.

Its function is as follows. Regulatory subunit of serine/threonine-protein phosphatase 4 (PP4). The probable PP4 complex Pp4-19C-PPP4R2r-flfl (PPP4C-PPP4R2-PPP4R3) is required to prevent caspase induced cell death (in vitro). In Drosophila melanogaster (Fruit fly), this protein is Serine/threonine-protein phosphatase 4 regulatory subunit 2 (PPP4R2r).